The sequence spans 313 residues: Nematocyst expressed protein 8 (313 aa).

Residues 1–19 (MLRRPLLLVLFTVFSTLYA) form the signal peptide. The tract at residues 24 to 56 (GVSPPTNESEAEVSPGDDEGPPEPGNEPDVNWR) is disordered. The span at 32–44 (SEAEVSPGDDEGP) shows a compositional bias: acidic residues. ShKT domains are found at residues 65–99 (CKDK…CRFC), 109–145 (CKDL…CELC), and 151–186 (FKYT…CRKY). 7 cysteine pairs are disulfide-bonded: C65-C99, C72-C92, C81-C96, C109-C145, C127-C142, C160-C179, and C169-C183. Over residues 222-244 (TAAPSTQPAETTKAPPNTAAPTA) the composition is skewed to low complexity. The interval 222-313 (TAAPSTQPAE…LCDEKHSSQQ (92 aa)) is disordered. A compositionally biased stretch (pro residues) spans 245 to 265 (APTPAPTPAPAPAPTPAPVAP). Acidic residues predominate over residues 280-297 (TPEEQDDNSADESTEIEA).

The protein belongs to the NEP3 family. As to expression, nematocytes. In late planulae, is only expressed in a handful of nematocytes in the lower pharynx. Is absent from the tentacles and outer body wall.

Its subcellular location is the nematocyst. It is found in the secreted. In terms of biological role, probable toxin probably only used for predation. This is Nematocyst expressed protein 8 from Nematostella vectensis (Starlet sea anemone).